We begin with the raw amino-acid sequence, 131 residues long: MVMTDPIADMLTRIRNANIVRHEVVEVPSSNVKKSIANILVQEGYVKDIEEYADGAVPMIRLSLKYNGKERIITGLKRISKPGLRVYCKKDNIPKVLNGLGVAIISTSKGIVTDREARKLGLGGEVICYVW.

Belongs to the universal ribosomal protein uS8 family. Part of the 30S ribosomal subunit. Contacts proteins S5 and S12.

In terms of biological role, one of the primary rRNA binding proteins, it binds directly to 16S rRNA central domain where it helps coordinate assembly of the platform of the 30S subunit. This is Small ribosomal subunit protein uS8 from Clostridium novyi (strain NT).